Consider the following 477-residue polypeptide: Serine/threonine-protein kinase pakC (477 aa).

The PH domain maps to 13 to 108; the sequence is SPDKEGELKK…WMKAVEKGSE (96 aa). The region spanning 112 to 125 is the CRIB domain; that stretch reads VSQPFNLKHEVHVD. In terms of domain architecture, Protein kinase spans 204–458; that stretch reads YKNMTKIGEG…ATDLLKHPFM (255 aa). ATP is bound by residues 210–218 and Lys233; that span reads IGEGAAGEV. The active-site Proton acceptor is Asp326.

This sequence belongs to the protein kinase superfamily. STE Ser/Thr protein kinase family. STE20 subfamily. As to quaternary structure, interacts with GTP-bound racB. It depends on Mg(2+) as a cofactor.

The protein resides in the cytoplasm. The protein localises to the membrane. The catalysed reaction is L-seryl-[protein] + ATP = O-phospho-L-seryl-[protein] + ADP + H(+). It carries out the reaction L-threonyl-[protein] + ATP = O-phospho-L-threonyl-[protein] + ADP + H(+). Its activity is regulated as follows. Kinase activity is rapidly and transiently increased in response to chemoattractant stimulation. Has role in the regulation of chemotaxis. The protein is Serine/threonine-protein kinase pakC (pakC) of Dictyostelium discoideum (Social amoeba).